The chain runs to 122 residues: Large ribosomal subunit protein uL18 (122 aa).

Belongs to the universal ribosomal protein uL18 family. In terms of assembly, part of the 50S ribosomal subunit; part of the 5S rRNA/L5/L18/L25 subcomplex. Contacts the 5S and 23S rRNAs.

This is one of the proteins that bind and probably mediate the attachment of the 5S RNA into the large ribosomal subunit, where it forms part of the central protuberance. In Mycobacterium avium (strain 104), this protein is Large ribosomal subunit protein uL18.